A 428-amino-acid polypeptide reads, in one-letter code: D-amino acid dehydrogenase (428 aa).

Residue 3–17 (VVILGSGVVGVASAY) participates in FAD binding.

It belongs to the DadA oxidoreductase family. FAD serves as cofactor.

It carries out the reaction a D-alpha-amino acid + A + H2O = a 2-oxocarboxylate + AH2 + NH4(+). It functions in the pathway amino-acid degradation; D-alanine degradation; NH(3) and pyruvate from D-alanine: step 1/1. Functionally, oxidative deamination of D-amino acids. The polypeptide is D-amino acid dehydrogenase (Burkholderia mallei (strain NCTC 10247)).